We begin with the raw amino-acid sequence, 169 residues long: NADH-quinone oxidoreductase subunit B (169 aa).

Residues Cys-42, Cys-43, Cys-107, and Cys-136 each contribute to the [4Fe-4S] cluster site.

The protein belongs to the complex I 20 kDa subunit family. In terms of assembly, NDH-1 is composed of 14 different subunits. Subunits NuoB, C, D, E, F, and G constitute the peripheral sector of the complex. Requires [4Fe-4S] cluster as cofactor.

The protein resides in the cell inner membrane. It carries out the reaction a quinone + NADH + 5 H(+)(in) = a quinol + NAD(+) + 4 H(+)(out). Its function is as follows. NDH-1 shuttles electrons from NADH, via FMN and iron-sulfur (Fe-S) centers, to quinones in the respiratory chain. The immediate electron acceptor for the enzyme in this species is believed to be ubiquinone. Couples the redox reaction to proton translocation (for every two electrons transferred, four hydrogen ions are translocated across the cytoplasmic membrane), and thus conserves the redox energy in a proton gradient. The protein is NADH-quinone oxidoreductase subunit B of Sulfurimonas denitrificans (strain ATCC 33889 / DSM 1251) (Thiomicrospira denitrificans (strain ATCC 33889 / DSM 1251)).